Reading from the N-terminus, the 574-residue chain is Fusion glycoprotein F0 (574 aa).

A signal peptide spans 1-25; sequence MELPILKANAITTILAAVTFCFASS. Residues 26-524 lie on the Extracellular side of the membrane; it reads QNITEEFYQS…HVNAGKSTTN (499 aa). N-linked (GlcNAc...) asparagine; by host glycosylation is found at asparagine 27 and asparagine 70. Cystine bridges form between cysteine 37–cysteine 439, cysteine 69–cysteine 212, cysteine 313–cysteine 343, cysteine 322–cysteine 333, cysteine 358–cysteine 367, cysteine 382–cysteine 393, and cysteine 416–cysteine 422. Residues 76 to 96 adopt a coiled-coil conformation; the sequence is VKLINQELDKYKNAVTELQLL. Asparagine 116, asparagine 120, and asparagine 126 each carry an N-linked (GlcNAc...) asparagine; by host glycan. A fusion peptide region spans residues 137 to 157; that stretch reads FLGFLLGVGSAIASGIAVSKV. The stretch at 158–209 forms a coiled coil; that stretch reads LHLEGEVNKIKSALLSTNKAVVSLSNGVSVLTSKVLDLKNYIDKQLLPIVNK. Positions 481–516 form a coiled coil; that stretch reads LVFPSDEFDASISQVNEKINQSLAFIRKSDELLHHV. Asparagine 500 carries N-linked (GlcNAc...) asparagine; by host glycosylation. A helical transmembrane segment spans residues 525 to 550; that stretch reads IMITTIIIVIIVILLSLIAVGLLLYC. Residue cysteine 550 is the site of S-palmitoyl cysteine; by host attachment. Residues 551 to 574 are Cytoplasmic-facing; the sequence is KARSTPVTLSKDQLSGINNIAFSN.

This sequence belongs to the paramyxoviruses fusion glycoprotein family. In terms of assembly, homotrimer. Heterodimer with fusion protein F2; disulfide-linked. Interacts with host NCL; this interaction plays a role in viral entry into the host cell. As a heterodimer with F2, interacts with host heparan sulfate. As a heterodimer with F2, interacts with host IGF1R; this interaction activates PRKCZ/PKCzeta that recruits NCL/nucleolin from the host nucleus to the plasma membrane. Part of a complex composed of F1, F2 and G glycoproteins. As a heterodimer with F2, interacts with host RHOA; this interaction facilitates virus-induced syncytium formation. Homotrimer. Heterodimer with fusion protein F1; disulfide-linked. As a heterodimer with F1, interacts with host heparan sulfate. As a heterodimer with F1, interacts with host IGF1R; this interaction activates PRKCZ/PKCzeta that recruits NCL/nucleolin from the host nucleus to the plasma membrane. Part of a complex composed of F1, F2 and G glycoproteins. As a heterodimer with F1, interacts with host RHOA; this interaction facilitates virus-induced syncytium formation. Post-translationally, the F glycoprotein is synthesized as a F0 inactive precursor that is heavily N-glycosylated and processed at two sites by a host furin-like protease probably in the Golgi. The cleavage site between p27 and F1 may occur after endocytosis to yield the mature F1 and F2 proteins. Both cleavages are required for membrane fusion and p27 is released from the processed protein.

The protein resides in the host Golgi apparatus membrane. The protein localises to the virion membrane. Its subcellular location is the host cell membrane. Inactive precursor that is cleaved at two sites by a furin-like protease to give rise to the mature F1 and F2 fusion glycoproteins. Functionally, class I viral fusion protein. Under the current model, the protein has at least 3 conformational states: pre-fusion native state, pre-hairpin intermediate state, and post-fusion hairpin state. During viral and plasma cell membrane fusion, the coiled coil regions assume a trimer-of-hairpins structure, positioning the fusion peptide in close proximity to the C-terminal region of the ectodomain. The formation of this structure appears to drive apposition and subsequent fusion of viral and cellular membranes leading to delivery of the nucleocapsid into the cytoplasm. This fusion is pH independent and occurs at the plasma or endosomal membrane. The trimer of F1-F2 (F protein) also facilitates the attachment to host cell by binding to host heparan sulfate. F protein is involved in the entry into the host cell through the interaction with host IGF1R. This interaction activates PRKCZ/PKCzeta that recruits host NCL/nucleolin to the apical cell surface where it can bind fusion glycoprotein F1. Later in infection, F protein expressed at the plasma membrane of infected cells can mediate fusion with adjacent cells to form syncytia, a cytopathic effect that could lead to tissue necrosis. F protein may trigger p53-dependent apoptosis. Its function is as follows. Major determinant of the species specificity of RSV infection. The trimer of F1-F2 (F protein) also facilitates the attachment to host cell by binding to host heparan sulfate. F protein is involved in the entry into the host cell through the interaction with host IGF1R. This interaction activates PRKCZ/PKCzeta that recruits host NCL/nucleolin to the apical cell surface where it can bind fusion glycoprotein F1. Later in infection, F protein expressed at the plasma membrane of infected cells can mediate fusion with adjacent cells to form syncytia, a cytopathic effect that could lead to tissue necrosis. F protein seems to trigger p53-dependent apoptosis. This chain is Fusion glycoprotein F0 (F), found in Homo sapiens (Human).